The chain runs to 321 residues: MAVKPTKAEKKIAYDQKLCQLLDEYSQVLIASADNVGSNQLQAIRIGLRGDSIVLMGKNTMMKRSIRLHAENTGNENLRNVEQLFLPNVGLIFTKGDLNQVREEISKYKVGAPARFGLVAPIDVVVPPGNTGLDPSQTSFFQVLNIPTKINKGTVEIITAVELIKKGEKVGSSEAALLAKLGIRPFSYGLNVESVYDDGSVFSPEVLDLTEDDLLARFATGVSMVTSLSLAISYPTLAAAPHSSSMGATMFLLLLLQPTMTSLRPRKLRSISRILAVASCSCSSAGTAPTGGGAAAAAVEEKKEEPEEESDDDIGFSLFDD.

The interval Ser-284–Asp-321 is disordered. Acidic residues predominate over residues Pro-306–Asp-321.

This sequence belongs to the universal ribosomal protein uL10 family. P0 forms a pentameric complex by interaction with dimers of P1 and P2. In terms of processing, phosphorylated.

Ribosomal protein P0 is the functional equivalent of E.coli protein L10. In Oxybasis rubra (Red goosefoot), this protein is Large ribosomal subunit protein uL10.